The primary structure comprises 316 residues: Pantothenate kinase (316 aa).

95 to 102 (GSVAVGKS) contacts ATP.

Belongs to the prokaryotic pantothenate kinase family.

It is found in the cytoplasm. The enzyme catalyses (R)-pantothenate + ATP = (R)-4'-phosphopantothenate + ADP + H(+). Its pathway is cofactor biosynthesis; coenzyme A biosynthesis; CoA from (R)-pantothenate: step 1/5. The polypeptide is Pantothenate kinase (Shewanella sp. (strain MR-4)).